The chain runs to 359 residues: 3-dehydroquinate synthase (359 aa).

Residues 71–76, 105–109, 129–130, K142, K151, and 169–172 contribute to the NAD(+) site; these read DGEAHK, GVIGD, TT, and TLHT. The Zn(2+) site is built by E184, H247, and H264.

Belongs to the sugar phosphate cyclases superfamily. Dehydroquinate synthase family. The cofactor is Co(2+). Zn(2+) is required as a cofactor. It depends on NAD(+) as a cofactor.

The protein resides in the cytoplasm. The catalysed reaction is 7-phospho-2-dehydro-3-deoxy-D-arabino-heptonate = 3-dehydroquinate + phosphate. It participates in metabolic intermediate biosynthesis; chorismate biosynthesis; chorismate from D-erythrose 4-phosphate and phosphoenolpyruvate: step 2/7. Catalyzes the conversion of 3-deoxy-D-arabino-heptulosonate 7-phosphate (DAHP) to dehydroquinate (DHQ). In Neisseria meningitidis serogroup C (strain 053442), this protein is 3-dehydroquinate synthase.